Here is a 223-residue protein sequence, read N- to C-terminus: NLP effector protein 2 (223 aa).

A Conserved undecapeptide motif motif is present at residues 90-100 (AIMYSWYFPKD). The short motif at 107-113 (GHRHDWE) is the Conserved p motif element.

This sequence belongs to the Necrosis inducing protein (NPP1) family.

It localises to the secreted. Its subcellular location is the host cytoplasm. Its function is as follows. Probable secreted effector that may act as a pathogen-associated molecular pattern (PAMP) recognized by the plant immune system. Seems not to induce necrosis, neither in several susceptible or resistant Vitis species nor in the dicot model plant Nicotiana benthamiana. The protein is NLP effector protein 2 of Plasmopara viticola (Downy mildew of grapevine).